Here is a 125-residue protein sequence, read N- to C-terminus: U-scoloptoxin(05)-Er1a (125 aa).

The signal sequence occupies residues 1–20 (MLSLGVSIFLLVFLIPENSG).

This sequence belongs to the scoloptoxin-05 family. Post-translationally, contains 4 disulfide bonds. In terms of tissue distribution, expressed by the venom gland.

It localises to the secreted. This is U-scoloptoxin(05)-Er1a from Ethmostigmus rubripes (Giant centipede).